A 487-amino-acid polypeptide reads, in one-letter code: Glutamyl-tRNA(Gln) amidotransferase subunit A (487 aa).

Active-site charge relay system residues include Lys78 and Ser153. Ser177 acts as the Acyl-ester intermediate in catalysis.

Belongs to the amidase family. GatA subfamily. Heterotrimer of A, B and C subunits.

The enzyme catalyses L-glutamyl-tRNA(Gln) + L-glutamine + ATP + H2O = L-glutaminyl-tRNA(Gln) + L-glutamate + ADP + phosphate + H(+). Allows the formation of correctly charged Gln-tRNA(Gln) through the transamidation of misacylated Glu-tRNA(Gln) in organisms which lack glutaminyl-tRNA synthetase. The reaction takes place in the presence of glutamine and ATP through an activated gamma-phospho-Glu-tRNA(Gln). The chain is Glutamyl-tRNA(Gln) amidotransferase subunit A from Oleidesulfovibrio alaskensis (strain ATCC BAA-1058 / DSM 17464 / G20) (Desulfovibrio alaskensis).